The primary structure comprises 1091 residues: Integrin alpha-6 (1091 aa).

The N-terminal stretch at 1–23 (MAVAGQLCLLYLSAGLLARLGTA) is a signal peptide. The Extracellular portion of the chain corresponds to 24–1011 (FNLDTREDNV…FPSKTVAQYS (988 aa)). FG-GAP repeat units lie at residues 30-95 (EDNV…GPCT), 101-166 (NDAD…IEDD), 176-229 (DGRL…FFDM), 244-300 (DHDE…KSAH), 301-363 (LLPE…KWSN), 364-419 (VKPI…GIIT), and 420-479 (KPTQ…VTPN). An N-linked (GlcNAc...) asparagine glycan is attached at Asn78. 3 disulfides stabilise this stretch: Cys86/Cys94, Cys131/Cys154, and Cys175/Cys188. 2 N-linked (GlcNAc...) asparagine glycosylation sites follow: Asn223 and Asn284. Ca(2+) is bound by residues Asp324, Asn326, Asp328, and Asp332. Asn370 carries an N-linked (GlcNAc...) asparagine glycan. 10 residues coordinate Ca(2+): Asp386, Asn388, Asp390, Tyr392, Asp394, Asp441, Asp443, Asn445, Tyr447, and Asp449. Cystine bridges form between Cys489-Cys496, Cys502-Cys562, Cys626-Cys632, and Cys726-Cys737. Residues Asn731, Asn746, and Asn927 are each glycosylated (N-linked (GlcNAc...) asparagine). 2 disulfide bridges follow: Cys881–Cys928 and Cys934–Cys939. A glycan (N-linked (GlcNAc...) asparagine) is linked at Asn958. Residues 1012-1037 (GVAWWIILLAVLAGILMLALLVFLLW) traverse the membrane as a helical segment. Over 1038 to 1091 (KCGFFKRSRYDDSIPRYHAVRIRKEEREIKDEKHMDNLEKKQWITKWNENESYS) the chain is Cytoplasmic. Cys1039 carries S-palmitoyl cysteine; by DHHC3 lipidation. The GFFKR motif signature appears at 1040 to 1044 (GFFKR). Arg1064 carries the phosphoserine modification.

This sequence belongs to the integrin alpha chain family. Heterodimer of an alpha and a beta subunit. The alpha subunit is composed of a heavy and a light chain linked by a disulfide bond. Alpha-6 associates with either beta-1 (ITGB1) or beta-4 (ITGB4) to form ITGA6:ITGB1 and ITGA6:ITGB4, respectively. ITGA6:ITGB1 is found in a complex with CD9; interaction takes place in oocytes and is involved in sperm-egg fusion. ITGA6:ITGB4 is found in a ternary complex with NRG1 and ERBB3. ITGA6:ITGB4 is found in a ternary complex with IGF1 and IGF1R. ITGA6:ITGB4 interacts with IGF2. Interacts with ADAM9. Interacts with RAB21. Interacts with MDK. ITGA6:ITGB1 interacts with MDK; this interaction mediates MDK-induced neurite outgrowth. Interacts with CD82; this interaction down-regulates ITGA6-mediated cell adhesion. Isoforms containing segment A, but not segment B, are the major targets for PMA-induced phosphorylation. Phosphorylation occurs on 'Ser-1064' of isoform alpha-6X1A. Phosphorylation is not required for the induction of integrin alpha-6A/beta-1 high affinity but may reduce the affinity for ligand. In terms of processing, undergoes PLAU-mediated cleavage at residues Arg-595-596-Arg in a time-dependent manner to produce processed integrin alpha-6 (alpha6p). Post-translationally, palmitoylation by DHHC3 enhances stability and cell surface expression. In terms of tissue distribution, expressed at low levels in normal skin tissue with elevated levels in skin tumors.

Its subcellular location is the cell membrane. Its function is as follows. Integrin alpha-6/beta-1 (ITGA6:ITGB1) is a receptor for laminin on platelets. Integrin alpha-6/beta-1 (ITGA6:ITGB1) is present in oocytes and is involved in sperm-egg fusion. Integrin alpha-6/beta-4 (ITGA6:ITGB4) is a receptor for laminin in epithelial cells and it plays a critical structural role in the hemidesmosome. ITGA6:ITGB4 binds to NRG1 (via EGF domain) and this binding is essential for NRG1-ERBB signaling. ITGA6:ITGB4 binds to IGF1 and this binding is essential for IGF1 signaling. ITGA6:ITGB4 binds to IGF2 and this binding is essential for IGF2 signaling. The polypeptide is Integrin alpha-6 (Itga6) (Mus musculus (Mouse)).